A 439-amino-acid polypeptide reads, in one-letter code: GTPase Der (439 aa).

EngA-type G domains lie at 3–167 and 176–351; these read PTVA…DKVG and IKVA…GNYT. Residues 9 to 16, 56 to 60, 119 to 122, 182 to 189, 229 to 233, and 294 to 297 contribute to the GTP site; these read GRPNVGKS, DTGGI, NKID, GKPNTGKS, DTAGL, and NKWD. The 85-residue stretch at 352-436 folds into the KH-like domain; that stretch reads RRITTGQIND…PIVFLIREKG (85 aa).

The protein belongs to the TRAFAC class TrmE-Era-EngA-EngB-Septin-like GTPase superfamily. EngA (Der) GTPase family. As to quaternary structure, associates with the 50S ribosomal subunit.

Functionally, GTPase that plays an essential role in the late steps of ribosome biogenesis. The polypeptide is GTPase Der (Caldicellulosiruptor saccharolyticus (strain ATCC 43494 / DSM 8903 / Tp8T 6331)).